We begin with the raw amino-acid sequence, 260 residues long: Snake venom serine protease homolog (260 aa).

The signal sequence occupies residues Met-1–Ala-18. The propeptide occupies Gln-19 to Leu-24. One can recognise a Peptidase S1 domain in the interval Ile-25–Ala-251. 6 disulfide bridges follow: Cys-31–Cys-165, Cys-52–Cys-68, Cys-100–Cys-258, Cys-144–Cys-212, Cys-176–Cys-191, and Cys-202–Cys-227. N-linked (GlcNAc...) asparagine glycans are attached at residues Asn-123 and Asn-124. Residue Asn-253 is glycosylated (N-linked (GlcNAc...) asparagine).

The protein belongs to the peptidase S1 family. Snake venom subfamily. As to expression, expressed by the venom gland.

The protein localises to the secreted. Functionally, snake venom serine protease homolog that may act in the hemostasis system of the prey. The protein is Snake venom serine protease homolog of Protobothrops jerdonii (Jerdon's pitviper).